A 162-amino-acid polypeptide reads, in one-letter code: Endoribonuclease YbeY (162 aa).

Zn(2+) is bound by residues His128, His132, and His138.

The protein belongs to the endoribonuclease YbeY family. It depends on Zn(2+) as a cofactor.

It localises to the cytoplasm. Its function is as follows. Single strand-specific metallo-endoribonuclease involved in late-stage 70S ribosome quality control and in maturation of the 3' terminus of the 16S rRNA. The polypeptide is Endoribonuclease YbeY (Lactococcus lactis subsp. cremoris (strain SK11)).